A 291-amino-acid chain; its full sequence is 3-hydroxy-5-phosphonooxypentane-2,4-dione thiolase (291 aa).

The Schiff-base intermediate with substrate role is filled by lysine 203.

This sequence belongs to the DeoC/FbaB aldolase family. As to quaternary structure, homodecamer.

Its subcellular location is the cytoplasm. The catalysed reaction is dihydroxyacetone phosphate + acetyl-CoA = 3-hydroxy-2,4-dioxopentyl phosphate + CoA. Involved in the degradation of phospho-AI-2, thereby terminating induction of the lsr operon and closing the AI-2 signaling cycle. Catalyzes the transfer of an acetyl moiety from 3-hydroxy-5-phosphonooxypentane-2,4-dione to CoA to form glycerone phosphate and acetyl-CoA. In Yersinia pseudotuberculosis serotype O:1b (strain IP 31758), this protein is 3-hydroxy-5-phosphonooxypentane-2,4-dione thiolase.